Consider the following 123-residue polypeptide: Small ribosomal subunit protein uS12cz/uS12cy (123 aa).

The protein belongs to the universal ribosomal protein uS12 family. Part of the 30S ribosomal subunit.

It localises to the plastid. It is found in the chloroplast. Its function is as follows. With S4 and S5 plays an important role in translational accuracy. Located at the interface of the 30S and 50S subunits. The protein is Small ribosomal subunit protein uS12cz/uS12cy (rps12-A) of Gossypium barbadense (Sea Island cotton).